Here is an 89-residue protein sequence, read N- to C-terminus: Small ribosomal subunit protein uS15 (89 aa).

The tract at residues 1 to 25 (MSLSAEQKGEIVKKHARTASDTGSP) is disordered.

It belongs to the universal ribosomal protein uS15 family. In terms of assembly, part of the 30S ribosomal subunit. Forms a bridge to the 50S subunit in the 70S ribosome, contacting the 23S rRNA.

In terms of biological role, one of the primary rRNA binding proteins, it binds directly to 16S rRNA where it helps nucleate assembly of the platform of the 30S subunit by binding and bridging several RNA helices of the 16S rRNA. Its function is as follows. Forms an intersubunit bridge (bridge B4) with the 23S rRNA of the 50S subunit in the ribosome. This chain is Small ribosomal subunit protein uS15, found in Alkalilimnicola ehrlichii (strain ATCC BAA-1101 / DSM 17681 / MLHE-1).